A 273-amino-acid polypeptide reads, in one-letter code: 4-hydroxy-tetrahydrodipicolinate reductase 1 (273 aa).

NAD(+) is bound by residues 13–18 (GAAGRM) and E39. Position 40 (R40) interacts with NADP(+). NAD(+) is bound by residues 103 to 105 (GTT) and 127 to 130 (SGNM). H161 functions as the Proton donor/acceptor in the catalytic mechanism. (S)-2,3,4,5-tetrahydrodipicolinate is bound at residue H162. Residue K165 is the Proton donor of the active site. 171–172 (GT) lines the (S)-2,3,4,5-tetrahydrodipicolinate pocket.

This sequence belongs to the DapB family.

It is found in the cytoplasm. It catalyses the reaction (S)-2,3,4,5-tetrahydrodipicolinate + NAD(+) + H2O = (2S,4S)-4-hydroxy-2,3,4,5-tetrahydrodipicolinate + NADH + H(+). It carries out the reaction (S)-2,3,4,5-tetrahydrodipicolinate + NADP(+) + H2O = (2S,4S)-4-hydroxy-2,3,4,5-tetrahydrodipicolinate + NADPH + H(+). The protein operates within amino-acid biosynthesis; L-lysine biosynthesis via DAP pathway; (S)-tetrahydrodipicolinate from L-aspartate: step 4/4. Catalyzes the conversion of 4-hydroxy-tetrahydrodipicolinate (HTPA) to tetrahydrodipicolinate. The polypeptide is 4-hydroxy-tetrahydrodipicolinate reductase 1 (Mesorhizobium japonicum (strain LMG 29417 / CECT 9101 / MAFF 303099) (Mesorhizobium loti (strain MAFF 303099))).